The following is a 343-amino-acid chain: Mating-type protein MAT-2 (343 aa).

Disordered stretches follow at residues 98–117 (RSPQ…SEQT) and 177–223 (KKPW…AAMT). The segment covering 99–117 (SPQVVSSPQSAQTSPSEQT) has biased composition (low complexity). Positions 131 to 199 (APRPMNCWII…EHLRQHPNYK (69 aa)) form a DNA-binding region, HMG box. A compositionally biased stretch (basic residues) spans 206 to 218 (GEKKKRQSRKSKR).

The protein localises to the nucleus. The protein is Mating-type protein MAT-2 (MAT2) of Cochliobolus heterostrophus (Southern corn leaf blight fungus).